The following is a 156-amino-acid chain: Small ribosomal subunit protein uS7 (156 aa).

This sequence belongs to the universal ribosomal protein uS7 family. As to quaternary structure, part of the 30S ribosomal subunit. Contacts proteins S9 and S11.

One of the primary rRNA binding proteins, it binds directly to 16S rRNA where it nucleates assembly of the head domain of the 30S subunit. Is located at the subunit interface close to the decoding center, probably blocks exit of the E-site tRNA. The polypeptide is Small ribosomal subunit protein uS7 (Syntrophomonas wolfei subsp. wolfei (strain DSM 2245B / Goettingen)).